Reading from the N-terminus, the 152-residue chain is Putative pseudoazurin (152 aa).

The first 23 residues, 1–23 (MPLKFGLIVATAALIASAASLMA), serve as a signal peptide directing secretion. Positions 28-116 (VQMLNKGTDG…MGMVALIQVG (89 aa)) constitute a Plastocyanin-like domain. Residues His63, Cys101, His104, and Met109 each coordinate Cu cation.

The cofactor is Cu cation.

The protein localises to the periplasm. Its function is as follows. This soluble electron transfer copper protein is required for the inactivation of copper-containing nitrite reductase in the presence of oxygen. The polypeptide is Putative pseudoazurin (azu) (Rhizobium leguminosarum bv. viciae).